Reading from the N-terminus, the 184-residue chain is NADH-quinone oxidoreductase subunit B (184 aa).

The [4Fe-4S] cluster site is built by cysteine 63, cysteine 64, cysteine 128, and cysteine 158.

This sequence belongs to the complex I 20 kDa subunit family. As to quaternary structure, NDH-1 is composed of 14 different subunits. Subunits NuoB, C, D, E, F, and G constitute the peripheral sector of the complex. [4Fe-4S] cluster is required as a cofactor.

It is found in the cell inner membrane. The catalysed reaction is a quinone + NADH + 5 H(+)(in) = a quinol + NAD(+) + 4 H(+)(out). Its function is as follows. NDH-1 shuttles electrons from NADH, via FMN and iron-sulfur (Fe-S) centers, to quinones in the respiratory chain. The immediate electron acceptor for the enzyme in this species is believed to be ubiquinone. Couples the redox reaction to proton translocation (for every two electrons transferred, four hydrogen ions are translocated across the cytoplasmic membrane), and thus conserves the redox energy in a proton gradient. The protein is NADH-quinone oxidoreductase subunit B of Xylella fastidiosa (strain M12).